The following is a 142-amino-acid chain: Succinate dehydrogenase subunit 6, mitochondrial (142 aa).

In terms of assembly, component of complex II composed of eight subunits in plants: four classical SDH subunits SDH1, SDH2, SDH3 and SDH4 (a flavoprotein (FP), an iron-sulfur protein (IP), and a cytochrome b composed of a large and a small subunit.), as well as four subunits unknown in mitochondria from bacteria and heterotrophic eukaryotes.

It localises to the mitochondrion inner membrane. The protein operates within carbohydrate metabolism; tricarboxylic acid cycle. This Oryza sativa subsp. japonica (Rice) protein is Succinate dehydrogenase subunit 6, mitochondrial.